A 947-amino-acid chain; its full sequence is Serine-aspartate repeat-containing protein C (947 aa).

Positions 1 to 50 (MNNKKTATNRKGMIPNRLNKFSIRKYSVGTASILVGTTLIFGLSGHEAKA) are cleaved as a signal peptide. The disordered stretch occupies residues 51–164 (AEHTNGELNQ…STTPKTTTIK (114 aa)). A ligand binding A region region spans residues 51–495 (AEHTNGELNQ…GSSTANGDQK (445 aa)). Polar residues predominate over residues 56–71 (GELNQSKNETTAPSEN). Residues 72–83 (KTTKKVDSRQLK) show a composition bias toward basic and acidic residues. Polar residues predominate over residues 84 to 155 (DNTQTATADQ…SNLTQAKDVS (72 aa)). CNA-B domains lie at 496–606 (KYNL…YKTP) and 607–717 (KYSL…EEET). Residues 678–927 (TQTGTNTTED…NNSNNGTLFG (250 aa)) are disordered. 2 stretches are compositionally biased toward acidic residues: residues 685 to 695 (TEDDKDADGGE) and 712 to 886 (YYEE…DSDS). An LPXTG sorting signal motif is present at residues 910–914 (LPETG). The segment covering 912 to 927 (ETGSENNNSNNGTLFG) has biased composition (low complexity). Residue threonine 913 is modified to Pentaglycyl murein peptidoglycan amidated threonine. The propeptide at 914–947 (GSENNNSNNGTLFGGLFAALGSLLLFGRRKKQNK) is removed by sortase.

It belongs to the serine-aspartate repeat-containing protein (SDr) family. As to quaternary structure, homodimerizes; via N2-Domain. Interacts with host NRXN1; this interaction mediates bacterial attachment to host cells.

The protein localises to the secreted. It is found in the cell wall. Its function is as follows. Cell surface-associated calcium-binding protein which plays an important role in adhesion and pathogenesis. Mediates interactions with components of the extracellular matrix such as host NRXN1 to promote bacterial adhesion. The protein is Serine-aspartate repeat-containing protein C (sdrC) of Staphylococcus aureus (strain COL).